The chain runs to 315 residues: tRNA dimethylallyltransferase (315 aa).

Position 10–17 (10–17) interacts with ATP; it reads GPTASGKS. 12–17 contributes to the substrate binding site; the sequence is TASGKS. The tract at residues 35–38 is interaction with substrate tRNA; sequence DSMQ.

The protein belongs to the IPP transferase family. As to quaternary structure, monomer. Mg(2+) serves as cofactor.

It carries out the reaction adenosine(37) in tRNA + dimethylallyl diphosphate = N(6)-dimethylallyladenosine(37) in tRNA + diphosphate. In terms of biological role, catalyzes the transfer of a dimethylallyl group onto the adenine at position 37 in tRNAs that read codons beginning with uridine, leading to the formation of N6-(dimethylallyl)adenosine (i(6)A). In Thermoanaerobacter pseudethanolicus (strain ATCC 33223 / 39E) (Clostridium thermohydrosulfuricum), this protein is tRNA dimethylallyltransferase.